The primary structure comprises 1014 residues: MICAL-like protein 2 (1014 aa).

The Calponin-homology (CH) domain occupies 1 to 107 (MAAIKALQEW…YVSQYYNYFH (107 aa)). The tract at residues 1-261 (MAAIKALQEW…KLSNLASRQP (261 aa)) is forms an intramolecular interaction with the C-terminal coiled coil domain keeping the protein in a closed conformation. Phosphoserine occurs at positions 110, 144, and 154. Positions 114–181 (GMAGMKRPSS…PSPKAAPGTV (68 aa)) are disordered. One can recognise an LIM zinc-binding domain in the interval 187 to 249 (SICGVCGKHV…THHSSEAVSV (63 aa)). Residue Ser250 is modified to Phosphoserine. Positions 262–394 (GGGIADTRPI…QGQAASKGVK (133 aa)) are necessary and sufficient for interaction with actinins. Residues 262–810 (GGGIADTRPI…QDDQTRSCKE (549 aa)) are mediates targeting to the cell plasma membrane. 2 disordered regions span residues 311–450 (LTPP…SRVP) and 609–780 (TLPK…RRKK). Positions 332–355 (STVTTTSANSKATTHVTNSSPVGW) are enriched in polar residues. A compositionally biased stretch (low complexity) spans 356–368 (SSSAQSSTGTSGS). Over residues 384–398 (PQGQAASKGVKTQLN) the composition is skewed to polar residues. Low complexity-rich tracts occupy residues 399–419 (SSTD…SSRT) and 438–447 (PASSSSSHAS). Polar residues-rich tracts occupy residues 624 to 633 (LSHSTTQAFS) and 646 to 656 (VGSTSWTSVSL). 2 stretches are compositionally biased toward basic and acidic residues: residues 701 to 711 (EGWRARLKPVD) and 720 to 737 (LEQK…DTPR). A compositionally biased stretch (polar residues) spans 747–758 (IHITLTPIQQKR). Thr759 is modified (phosphothreonine). A phosphoserine mark is found at Ser773 and Ser837. The tract at residues 811 to 918 (KTATWGTRES…LMYKSKDQCL (108 aa)) is forms an intramolecular interaction with the N-terminal Calponin-homology and LIM zinc-binding domains-containing region keeping the protein in a closed conformation. A bMERB domain is found at 838–985 (PVRLHPNYIS…EQEEDQMLES (148 aa)). Residues 845–885 (YISQEELQRQLQDIERQLDALELRGVELEKRLRAAEGDASE) are a coiled coil. Residues 918-1014 (LEERQLDLQG…WSSKSKSGQT (97 aa)) form a mediates interaction with RAB13 and is required for transition from the closed to the open conformation region.

In terms of assembly, interacts with RAB13 (GTP-bound form); competes with RAB8A and is involved in tight junctions assembly. Interacts with RAB8A; competes with RAB13 and is involved in E-cadherin endocytic recycling. Interacts with RAB8B. Interacts (preferentially in opened conformation) with ACTN1 and ACTN4; stimulated by RAB13 activation. Interacts (via calponin-homology (CH) domain) with the filamins FLNA, FLNB and FLNC (via actin-binding domain).

The protein localises to the cell membrane. Its subcellular location is the cell junction. The protein resides in the tight junction. It localises to the recycling endosome. It is found in the cell projection. The protein localises to the neuron projection. Its subcellular location is the cytoplasm. The protein resides in the cytoskeleton. In terms of biological role, effector of small Rab GTPases which is involved in junctional complexes assembly through the regulation of cell adhesion molecules transport to the plasma membrane and actin cytoskeleton reorganization. Regulates the endocytic recycling of occludins, claudins and E-cadherin to the plasma membrane and may thereby regulate the establishment of tight junctions and adherens junctions. In parallel, may regulate actin cytoskeleton reorganization directly through interaction with F-actin or indirectly through actinins and filamins. Most probably involved in the processes of epithelial cell differentiation, cell spreading and neurite outgrowth. Undergoes liquid-liquid phase separation to form tubular recycling endosomes. Plays 2 sequential roles in the biogenesis of tubular recycling endosomes: first organizes phase separation and then the closed form formed by interaction with RAB8A promotes endosomal tubulation. The polypeptide is MICAL-like protein 2 (Micall2) (Rattus norvegicus (Rat)).